A 380-amino-acid chain; its full sequence is tRNA pseudouridine synthase B (380 aa).

Asp-63 functions as the Nucleophile in the catalytic mechanism. Residues 309-339 form a disordered region; that stretch reads QNVEDDNDDNDDNDDNDDNDDNDDNDDNDDN. Residues 311–338 are compositionally biased toward acidic residues; it reads VEDDNDDNDDNDDNDDNDDNDDNDDNDD.

The protein belongs to the pseudouridine synthase TruB family. Type 1 subfamily.

It catalyses the reaction uridine(55) in tRNA = pseudouridine(55) in tRNA. In terms of biological role, responsible for synthesis of pseudouridine from uracil-55 in the psi GC loop of transfer RNAs. The chain is tRNA pseudouridine synthase B from Psychrobacter arcticus (strain DSM 17307 / VKM B-2377 / 273-4).